Reading from the N-terminus, the 341-residue chain is Methionine import ATP-binding protein MetN 2 (341 aa).

The ABC transporter domain maps to 2 to 241; the sequence is IQFKNISKHY…PQHPTTKTFI (240 aa). Residue 38–45 coordinates ATP; the sequence is GYSGAGKS.

It belongs to the ABC transporter superfamily. Methionine importer (TC 3.A.1.24) family. In terms of assembly, the complex is composed of two ATP-binding proteins (MetN), two transmembrane proteins (MetI) and a solute-binding protein (MetQ).

The protein resides in the cell inner membrane. The enzyme catalyses L-methionine(out) + ATP + H2O = L-methionine(in) + ADP + phosphate + H(+). It carries out the reaction D-methionine(out) + ATP + H2O = D-methionine(in) + ADP + phosphate + H(+). Its function is as follows. Part of the ABC transporter complex MetNIQ involved in methionine import. Responsible for energy coupling to the transport system. The protein is Methionine import ATP-binding protein MetN 2 of Acinetobacter baylyi (strain ATCC 33305 / BD413 / ADP1).